We begin with the raw amino-acid sequence, 175 residues long: Ribulose bisphosphate carboxylase small subunit, chloroplastic (175 aa).

A chloroplast-targeting transit peptide spans 1-46; it reads MAPTVMASSATSVAPFQGLKSTAGLPVSRRSNGASLGSVSNGGRIR.

This sequence belongs to the RuBisCO small chain family. Heterohexadecamer of 8 large and 8 small subunits.

Its subcellular location is the plastid. The protein resides in the chloroplast. Functionally, ruBisCO catalyzes two reactions: the carboxylation of D-ribulose 1,5-bisphosphate, the primary event in carbon dioxide fixation, as well as the oxidative fragmentation of the pentose substrate. Both reactions occur simultaneously and in competition at the same active site. Although the small subunit is not catalytic it is essential for maximal activity. This Aegilops tauschii (Tausch's goatgrass) protein is Ribulose bisphosphate carboxylase small subunit, chloroplastic.